We begin with the raw amino-acid sequence, 188 residues long: Ribosome maturation factor RimM (188 aa).

A PRC barrel domain is found at 96 to 169 (DDEFYYADLE…TLLIDPLAAG (74 aa)).

This sequence belongs to the RimM family. As to quaternary structure, binds ribosomal protein uS19.

The protein localises to the cytoplasm. Functionally, an accessory protein needed during the final step in the assembly of 30S ribosomal subunit, possibly for assembly of the head region. Essential for efficient processing of 16S rRNA. May be needed both before and after RbfA during the maturation of 16S rRNA. It has affinity for free ribosomal 30S subunits but not for 70S ribosomes. This chain is Ribosome maturation factor RimM, found in Rhizobium etli (strain ATCC 51251 / DSM 11541 / JCM 21823 / NBRC 15573 / CFN 42).